A 406-amino-acid chain; its full sequence is Cysteine desulfurase (406 aa).

Lys-226 carries the N6-(pyridoxal phosphate)lysine modification. Catalysis depends on Cys-364, which acts as the Cysteine persulfide intermediate.

The protein belongs to the class-V pyridoxal-phosphate-dependent aminotransferase family. Csd subfamily. In terms of assembly, homodimer. Interacts with SufE and the SufBCD complex composed of SufB, SufC and SufD. The interaction with SufE is required to mediate the direct transfer of the sulfur atom from the S-sulfanylcysteine. The cofactor is pyridoxal 5'-phosphate.

It localises to the cytoplasm. It carries out the reaction (sulfur carrier)-H + L-cysteine = (sulfur carrier)-SH + L-alanine. The enzyme catalyses L-selenocysteine + AH2 = hydrogenselenide + L-alanine + A + H(+). It participates in cofactor biosynthesis; iron-sulfur cluster biosynthesis. Cysteine desulfurases mobilize the sulfur from L-cysteine to yield L-alanine, an essential step in sulfur metabolism for biosynthesis of a variety of sulfur-containing biomolecules. Component of the suf operon, which is activated and required under specific conditions such as oxidative stress and iron limitation. Acts as a potent selenocysteine lyase in vitro, that mobilizes selenium from L-selenocysteine. Selenocysteine lyase activity is however unsure in vivo. The chain is Cysteine desulfurase from Escherichia coli (strain SE11).